Consider the following 162-residue polypeptide: Early E1A 18 kDa protein (162 aa).

The interval 134-162 is disordered; the sequence is EEPTEGVAENSLKRQADSSLCSSSPKRFC. Over residues 150-162 the composition is skewed to polar residues; that stretch reads DSSLCSSSPKRFC.

The polypeptide is Early E1A 18 kDa protein (Tree shrew adenovirus serotype 1 (TSAdV-1)).